A 582-amino-acid chain; its full sequence is ATP-dependent lipid A-core flippase (582 aa).

Helical transmembrane passes span 27-48 (LVVS…ISLL), 63-85 (FLRI…GFAS), 144-168 (VSIV…WQLS), 170-188 (VLIV…VSKR), 244-266 (LVSA…LFAV), and 283-302 (TFTV…KALT). One can recognise an ABC transmembrane type-1 domain in the interval 28 to 310 (VVSTIALVIN…LTSVTSEFQR (283 aa)). The region spanning 342–578 (VDVKDVTFTY…DGAYAQLHRI (237 aa)) is the ABC transporter domain. 376–383 (GRSGSGKS) lines the ATP pocket.

This sequence belongs to the ABC transporter superfamily. Lipid exporter (TC 3.A.1.106) family. Homodimer.

It is found in the cell inner membrane. The catalysed reaction is ATP + H2O + lipid A-core oligosaccharideSide 1 = ADP + phosphate + lipid A-core oligosaccharideSide 2.. In terms of biological role, involved in lipopolysaccharide (LPS) biosynthesis. Translocates lipid A-core from the inner to the outer leaflet of the inner membrane. Transmembrane domains (TMD) form a pore in the inner membrane and the ATP-binding domain (NBD) is responsible for energy generation. Shows ATPase activity. The chain is ATP-dependent lipid A-core flippase from Vibrio cholerae serotype O1 (strain ATCC 39315 / El Tor Inaba N16961).